A 132-amino-acid chain; its full sequence is MSSFLGKWKLSETHNFDAVMSKLGVSWPIRQMGNTVTPTVTFTMDGDTMTMLTESTFKNLSVTFKFGEEFDEKTSDGRNVKSVVTKDSESKITQTQKDAKNTTVIVREIVGDTMKTTVTVDDVTAIRNYKRL.

Residues Arg-107 and Arg-127–Tyr-129 each bind (5Z,8Z,11Z,14Z)-eicosatetraenoate. Residues Arg-107 and Arg-127–Tyr-129 contribute to the (9Z)-octadecenoate site.

It belongs to the calycin superfamily. Fatty-acid binding protein (FABP) family.

It is found in the cytoplasm. Functionally, may play a role in the transport of fatty acids. Binds to various fatty acids but not retinoids. The sequence is that of Fatty acid-binding protein from Schistosoma japonicum (Blood fluke).